Consider the following 543-residue polypeptide: Glucose-6-phosphate isomerase (543 aa).

Glutamate 353 (proton donor) is an active-site residue. Residues histidine 384 and lysine 504 contribute to the active site.

The protein belongs to the GPI family.

It localises to the cytoplasm. The enzyme catalyses alpha-D-glucose 6-phosphate = beta-D-fructose 6-phosphate. It functions in the pathway carbohydrate biosynthesis; gluconeogenesis. Its pathway is carbohydrate degradation; glycolysis; D-glyceraldehyde 3-phosphate and glycerone phosphate from D-glucose: step 2/4. Catalyzes the reversible isomerization of glucose-6-phosphate to fructose-6-phosphate. The protein is Glucose-6-phosphate isomerase of Roseiflexus sp. (strain RS-1).